A 257-amino-acid chain; its full sequence is MILIEDLTVVSQREIAPRIFEMVLKGEMVADMQLGQFVHLKVPDPSKLLRRPISISEIDYNKKEATIVYRVEREGTAILSKMVAGQTIDTMGPQGNGFDISIIEAGQKALLVGGGIGVPPLVETAKQLKAKGVEVVSVIGFANKNAVILEDKLRACGDVYVTTDDGSYGIKGYVSTVIDNFDWTPDAVYSCGAPGMLKYVDSKFENHPHAYVSMEARMACGMGACYACVVHVKGETDAKNLRVCEEGPVFPTGKVIV.

The FAD-binding FR-type domain occupies 2–100 (ILIEDLTVVS…MGPQGNGFDI (99 aa)). FAD-binding positions include 51 to 54 (RPIS), 68 to 70 (VYR), and 75 to 76 (GT). Cysteine 220, cysteine 225, cysteine 228, and cysteine 244 together coordinate [2Fe-2S] cluster.

This sequence belongs to the PyrK family. Heterotetramer of 2 PyrK and 2 PyrD type B subunits. [2Fe-2S] cluster is required as a cofactor. It depends on FAD as a cofactor.

It functions in the pathway pyrimidine metabolism; UMP biosynthesis via de novo pathway; orotate from (S)-dihydroorotate (NAD(+) route): step 1/1. Its function is as follows. Responsible for channeling the electrons from the oxidation of dihydroorotate from the FMN redox center in the PyrD type B subunit to the ultimate electron acceptor NAD(+). This is Dihydroorotate dehydrogenase B (NAD(+)), electron transfer subunit from Streptococcus thermophilus (strain ATCC BAA-491 / LMD-9).